The primary structure comprises 155 residues: Interleukin-2 (155 aa).

Residues 1 to 20 form the signal peptide; it reads MYRMQLLSCIALTLALVANG. An O-linked (GalNAc...) threonine glycan is attached at threonine 23. Residues cysteine 79 and cysteine 127 are joined by a disulfide bond.

The protein belongs to the IL-2 family.

The protein resides in the secreted. Cytokine produced by activated CD4-positive helper T-cells and to a lesser extend activated CD8-positive T-cells and natural killer (NK) cells that plays pivotal roles in the immune response and tolerance. Binds to a receptor complex composed of either the high-affinity trimeric IL-2R (IL2RA/CD25, IL2RB/CD122 and IL2RG/CD132) or the low-affinity dimeric IL-2R (IL2RB and IL2RG). Interaction with the receptor leads to oligomerization and conformation changes in the IL-2R subunits resulting in downstream signaling starting with phosphorylation of JAK1 and JAK3. In turn, JAK1 and JAK3 phosphorylate the receptor to form a docking site leading to the phosphorylation of several substrates including STAT5. This process leads to activation of several pathways including STAT, phosphoinositide-3-kinase/PI3K and mitogen-activated protein kinase/MAPK pathways. Functions as a T-cell growth factor and can increase NK-cell cytolytic activity as well. Promotes strong proliferation of activated B-cells and subsequently immunoglobulin production. Plays a pivotal role in regulating the adaptive immune system by controlling the survival and proliferation of regulatory T-cells, which are required for the maintenance of immune tolerance. Moreover, participates in the differentiation and homeostasis of effector T-cell subsets, including Th1, Th2, Th17 as well as memory CD8-positive T-cells. The polypeptide is Interleukin-2 (IL2) (Capra hircus (Goat)).